The primary structure comprises 445 residues: Chromosome partition protein MukF (445 aa).

Residues 213-241 (LSETSNTLKELQDTLQAAGDELQTQILDI) are leucine-zipper.

Belongs to the MukF family. Interacts, and probably forms a ternary complex, with MukE and MukB via its C-terminal region. The complex formation is stimulated by calcium or magnesium. It is required for an interaction between MukE and MukB.

It is found in the cytoplasm. The protein resides in the nucleoid. Its function is as follows. Involved in chromosome condensation, segregation and cell cycle progression. May participate in facilitating chromosome segregation by condensation DNA from both sides of a centrally located replisome during cell division. Not required for mini-F plasmid partitioning. Probably acts via its interaction with MukB and MukE. Overexpression results in anucleate cells. It has a calcium binding activity. This is Chromosome partition protein MukF from Vibrio vulnificus (strain YJ016).